Here is a 307-residue protein sequence, read N- to C-terminus: Glutaminase 1 (307 aa).

The substrate site is built by Ser62, Asn114, Glu159, Asn166, Tyr190, Tyr242, and Val260.

Belongs to the glutaminase family. Homotetramer.

It carries out the reaction L-glutamine + H2O = L-glutamate + NH4(+). In Clostridium perfringens (strain 13 / Type A), this protein is Glutaminase 1.